We begin with the raw amino-acid sequence, 395 residues long: Cytoplasmic 60S subunit biogenesis factor REI1 homolog 2 (395 aa).

4 C2H2-type zinc fingers span residues 4 to 28 (LACN…SEWH), 68 to 92 (YSCG…SKSH), 171 to 194 (ACCL…HKFH), and 222 to 249 (FVCL…AKGH).

Belongs to the REI1 family. Can form homodimer. Interacts with RLP24, RLP24A, RPL24B, EBP1 and JJJ1.

It is found in the cytoplasm. In terms of biological role, pre-60S-associated factor involved in the cytoplasmic maturation of the 60S subunit. Involved in the dissociation and recycling of other late pre-60S factors before newly synthesized large ribosomal subunits enter translation. Can complement the growth defect of a yeast mutant lacking REI1. Required for leaf growth under cold temperature conditions. The chain is Cytoplasmic 60S subunit biogenesis factor REI1 homolog 2 from Arabidopsis thaliana (Mouse-ear cress).